We begin with the raw amino-acid sequence, 158 residues long: MAIHKEVSFLAYLLVLGMLLFVSAMEHVDAKACTLECGNLGYGICPRSEGSPENPICTNCCAGYKGCNYYSANGTFICEGQSHPKNPKACPRNCDPHIAYSKCPRSGGKTLIYPTGCTTCCTGYTDCYYFGKDGKFVCEGESIEPKACTLECDSRLHT.

The first 24 residues, 1–24 (MAIHKEVSFLAYLLVLGMLLFVSA), serve as a signal peptide directing secretion. Tandem repeats lie at residues 29–86 (DAKA…HPKN) and 87–146 (PKAC…IEPK). 8 cysteine pairs are disulfide-bonded: Cys33-Cys121, Cys37-Cys117, Cys45-Cys127, Cys57-Cys94, Cys60-Cys78, Cys61-Cys90, Cys67-Cys103, and Cys120-Cys138.

This sequence belongs to the protease inhibitor I20 (potato type II proteinase inhibitor) family.

The polypeptide is Proteinase inhibitor type-2 (Solanum tuberosum (Potato)).